The following is a 258-amino-acid chain: Thiazole synthase (258 aa).

Residue K100 is the Schiff-base intermediate with DXP of the active site. Residues G161, 187-188 (AG), and 209-210 (NS) each bind 1-deoxy-D-xylulose 5-phosphate.

It belongs to the ThiG family. In terms of assembly, homotetramer. Forms heterodimers with either ThiH or ThiS.

The protein localises to the plastid. The protein resides in the chloroplast. It carries out the reaction [ThiS sulfur-carrier protein]-C-terminal-Gly-aminoethanethioate + 2-iminoacetate + 1-deoxy-D-xylulose 5-phosphate = [ThiS sulfur-carrier protein]-C-terminal Gly-Gly + 2-[(2R,5Z)-2-carboxy-4-methylthiazol-5(2H)-ylidene]ethyl phosphate + 2 H2O + H(+). Its pathway is cofactor biosynthesis; thiamine diphosphate biosynthesis. Functionally, catalyzes the rearrangement of 1-deoxy-D-xylulose 5-phosphate (DXP) to produce the thiazole phosphate moiety of thiamine. Sulfur is provided by the thiocarboxylate moiety of the carrier protein ThiS. In vitro, sulfur can be provided by H(2)S. The chain is Thiazole synthase from Cyanidioschyzon merolae (strain NIES-3377 / 10D) (Unicellular red alga).